Reading from the N-terminus, the 490-residue chain is MKGLLSLSVLPVLAYASPMIVDSIHQNAAPILSSTNAKDIPDSYIVVFKKGVTSTSALAHQNWVQDIHTSVESKRMKKRNQFTFKNEAFDGLKHTFDFAGGFLGYSGHFDEEVIEQVRRHPDVEYIERDSEVHTLKAATENGAPWGLARISHRDKLNFGTFNKYIYASQGGEGVDAYVIDTGTNIDHVDFEGRASWGKTIPQGDDDVDGNGHGTHCSGTIAGKKYGVAKKANVYAVKVLRTSGSGTMSDVVKGVQWAAESHLKSVAEAKKGNRKGFKGSVANMSLGGGKSVTLDRVVDQAVAVGMHFAVAAGNDNADACNYSPAGSKNSITVGASTLADERAYFSNFGKCTDIFAPGLNIQSTWIGSKHAVNTISGTSMASPHICGLLAYFLSLQPASDSAFAVAEITPAEMKENMISIASKDLLSDIPSDTPNLLAWNGGGSDDYKKIIGGARENDTTEFSSTLTEKLEKLAEEGLTAIYNELKDAVVA.

The N-terminal stretch at 1–26 (MKGLLSLSVLPVLAYASPMIVDSIHQ) is a signal peptide. The propeptide occupies 27–134 (NAAPILSSTN…YIERDSEVHT (108 aa)). The Inhibitor I9 domain occupies 43–134 (SYIVVFKKGV…YIERDSEVHT (92 aa)). The 307-residue stretch at 144–450 (PWGLARISHR…GGSDDYKKII (307 aa)) folds into the Peptidase S8 domain. Residues Asp180 and His212 each act as charge relay system in the active site. Asn282 carries an N-linked (GlcNAc...) asparagine glycan. Ser378 serves as the catalytic Charge relay system. N-linked (GlcNAc...) asparagine glycosylation occurs at Asn456.

Belongs to the peptidase S8 family.

The protein resides in the secreted. In terms of biological role, secreted subtilisin-like serine protease with keratinolytic activity that contributes to pathogenicity. The chain is Subtilisin-like protease 8 (SUB8) from Trichophyton verrucosum (strain HKI 0517).